We begin with the raw amino-acid sequence, 614 residues long: Polyamine transporter 2 (614 aa).

Residues 1 to 40 (MSDQESVVSFNSQNTSMVDVEGQQPQQYVPSKTNSRANQL) are disordered. The Cytoplasmic segment spans residues 1 to 173 (MSDQESVVSF…WPSWVRWSYT (173 aa)). Ser-50 is subject to Phosphoserine. Residues 99 to 122 (RTASALSRTRTKQLNRTATNSSST) show a composition bias toward polar residues. The disordered stretch occupies residues 99–144 (RTASALSRTRTKQLNRTATNSSSTGKEEMEEEETEEREDQSGENEL). Residues 126-144 (EMEEEETEEREDQSGENEL) show a composition bias toward acidic residues. Residues 174-194 (VLLSILVICVAYGSACISGGL) traverse the membrane as a helical segment. Topologically, residues 195 to 206 (GTVEKKYHVGME) are extracellular. Residues 207-227 (AAILSCSLMVIGFSLGPLIWS) form a helical membrane-spanning segment. Residues 228 to 236 (PVSDLYGRR) lie on the Cytoplasmic side of the membrane. Residues 237-257 (VAYFVSMGLYVIFNIPCALAP) form a helical membrane-spanning segment. Topologically, residues 258 to 266 (NLGCLLACR) are extracellular. The chain crosses the membrane as a helical span at residues 267 to 287 (FLCGVWSSSGLCLVGGSIADM). The Cytoplasmic segment spans residues 288-297 (FPSETRGKAI). A helical membrane pass occupies residues 298–318 (AFFAFAPYVGPVVGPLVNGFI). The Extracellular segment spans residues 319-326 (SVSTGRMD). Residues 327-347 (LIFWVNMAFAGVMWIISSAIP) traverse the membrane as a helical segment. Residues 348 to 407 (ETYAPVILKRKAARLRKETGNPKIMTEQEAQGVSMSEMMRACLLRPLYFAVTEPVLVATC) are Cytoplasmic-facing. Residues 408 to 428 (FYVCLIYSLLYAFFFAFPVIF) form a helical membrane-spanning segment. Residues 429 to 437 (GELYGYKDN) lie on the Extracellular side of the membrane. Residues 438 to 458 (LVGLMFIPIVIGALWALATTF) form a helical membrane-spanning segment. The Cytoplasmic segment spans residues 459–478 (YCENKYLQIVKQRKPTPEDR). A helical membrane pass occupies residues 479 to 499 (LLGAKIGAPFAAIALWILGAT). Over 500–503 (AYKH) the chain is Extracellular. The chain crosses the membrane as a helical span at residues 504-524 (IIWVGPASAGLAFGFGMVLIY). Over 525–541 (YSLNNYIIDCYVQYASS) the chain is Cytoplasmic. A helical membrane pass occupies residues 542–562 (ALATKVFLRSAGGAAFPLFTI). Residues 563–574 (QMYHKLNLHWGS) are Extracellular-facing. The chain crosses the membrane as a helical span at residues 575–595 (WLLAFISTAMIALPFAFSYWG). At 596-614 (KGLRHKLSKKDYSIDSVEM) the chain is on the cytoplasmic side.

Belongs to the major facilitator superfamily. DHA1 family. Polyamines/proton antiporter (TC 2.A.1.2.16) subfamily.

Its subcellular location is the cell membrane. Its function is as follows. Cell membrane polyamine/proton antiporter, involved in the detoxification of excess polyamines in the cytoplasm. Recognizes spermine, but not spermidine. The sequence is that of Polyamine transporter 2 (TPO2) from Saccharomyces cerevisiae (strain ATCC 204508 / S288c) (Baker's yeast).